Reading from the N-terminus, the 958-residue chain is SLIT and NTRK-like protein 5 (958 aa).

Positions 1-40 (MHTCCPPVTLEQDLHRKMHSWMLQTLAFAVTSLVLSCAET) are cleaved as a signal peptide. Over 41–664 (IDYYGEICDN…GGGASSVPLS (624 aa)) the chain is Extracellular. 6 LRR repeats span residues 82–103 (PIYHLLLSGNLLNRLYPNEFVN), 106–127 (GASILHLGSNVIQDIETGAFHG), 130–151 (GLRRLHLNNNKLELLRDDTFLG), 154–175 (NLEYLQVDYNYISVIEPNAFGK), 178–199 (LLQVLILNDNLLSSLPNNLFRF), and 201–222 (PLTHLDLRGNRLKLLPYVGLLQ). N-linked (GlcNAc...) asparagine glycosylation occurs at Asn103. The LRRCT 1 domain occupies 235 to 286 (NPWNCSCELISLKDWLDSISYSALVGDVVCETPFRLHGRDLDEVSKQELCPR). A disordered region spans residues 317 to 358 (ATSSSAVYKPPLKPPKGTRQPNKPRVRPTSRQPSKDLGYSNY). In terms of domain architecture, LRRNT spans 365–407 (QTKSPVPLECPTACSCNLQISDLGLNVNCQERKIESIAELQPK). 6 LRR repeats span residues 410–431 (NPKKMYLTENYIAVVRRTDFLE), 434–455 (GLDLLHLGNNRISMIQDRAFGD), 458–479 (NLRRLYLNGNRIERLSPELFYG), 482–503 (SLQYLFLQYNLIREIQSGTFDP), 506–527 (NLQLLFLNNNLLQAMPSGVFSG), and 529–550 (TLLRLNLRSNHFTSLPVSGVLD). The LRRCT 2 domain maps to 563 to 614 (NPWDCTCDIVGMKLWVEQLKVGVLVDEVICKAPKKFAETDMRSIKSELLCPD). The N-linked (GlcNAc...) asparagine glycan is linked to Asn644. The chain crosses the membrane as a helical span at residues 665–685 (VLILSLLLVFIMSVFVAAGLF). The Cytoplasmic portion of the chain corresponds to 686-958 (VLVMKRRKKN…LEKQTTFSQF (273 aa)). Residues 789 to 844 (NHHLQQQQQPPPPPQQPQQQPPPQLQLQPGEEERRESHHLRSPAYSVSTIEPREDL) are disordered. The span at 797–812 (QPPPPPQQPQQQPPPQ) shows a compositional bias: pro residues.

Belongs to the SLITRK family. In terms of tissue distribution, expressed predominantly in the cerebral cortex of the brain but also at low levels in the spinal cord and medulla.

It localises to the membrane. In terms of biological role, suppresses neurite outgrowth. This Homo sapiens (Human) protein is SLIT and NTRK-like protein 5 (SLITRK5).